Reading from the N-terminus, the 91-residue chain is PqqA binding protein (91 aa).

This sequence belongs to the PqqD family. Monomer. Interacts with PqqE.

The protein operates within cofactor biosynthesis; pyrroloquinoline quinone biosynthesis. Functions as a PqqA binding protein and presents PqqA to PqqE, in the pyrroloquinoline quinone (PQQ) biosynthetic pathway. The polypeptide is PqqA binding protein (Pseudomonas fluorescens (strain Pf0-1)).